Reading from the N-terminus, the 241-residue chain is Small ribosomal subunit protein uS2 (241 aa).

It belongs to the universal ribosomal protein uS2 family.

In Proteus mirabilis (strain HI4320), this protein is Small ribosomal subunit protein uS2.